The sequence spans 280 residues: Octanoyl-[GcvH]:protein N-octanoyltransferase (280 aa).

The BPL/LPL catalytic domain maps to 40–245; the sequence is QERGAVLRAW…VLSTVSLLQN (206 aa). Catalysis depends on cysteine 144, which acts as the Acyl-thioester intermediate.

This sequence belongs to the octanoyltransferase LipL family.

It catalyses the reaction N(6)-octanoyl-L-lysyl-[glycine-cleavage complex H protein] + L-lysyl-[lipoyl-carrier protein] = N(6)-octanoyl-L-lysyl-[lipoyl-carrier protein] + L-lysyl-[glycine-cleavage complex H protein]. Its pathway is protein modification; protein lipoylation via endogenous pathway; protein N(6)-(lipoyl)lysine from octanoyl-[acyl-carrier-protein]. Catalyzes the amidotransfer (transamidation) of the octanoyl moiety from octanoyl-GcvH to the lipoyl domain of the E2 subunit of lipoate-dependent enzymes. The chain is Octanoyl-[GcvH]:protein N-octanoyltransferase from Exiguobacterium sp. (strain ATCC BAA-1283 / AT1b).